The sequence spans 357 residues: 3-dehydroquinate synthase (357 aa).

Residues T126 to T127, K139, and K148 each bind NAD(+). Zn(2+) contacts are provided by E181, H244, and H261.

This sequence belongs to the sugar phosphate cyclases superfamily. Dehydroquinate synthase family. Co(2+) serves as cofactor. It depends on Zn(2+) as a cofactor. NAD(+) is required as a cofactor.

The protein resides in the cytoplasm. The enzyme catalyses 7-phospho-2-dehydro-3-deoxy-D-arabino-heptonate = 3-dehydroquinate + phosphate. It participates in metabolic intermediate biosynthesis; chorismate biosynthesis; chorismate from D-erythrose 4-phosphate and phosphoenolpyruvate: step 2/7. Functionally, catalyzes the conversion of 3-deoxy-D-arabino-heptulosonate 7-phosphate (DAHP) to dehydroquinate (DHQ). The polypeptide is 3-dehydroquinate synthase (Solibacter usitatus (strain Ellin6076)).